The sequence spans 812 residues: Probable E3 ubiquitin-protein ligase hulA (812 aa).

Residues 1-109 enclose the C2 domain; the sequence is MTCSQPNLRV…QMGGDEMLTR (109 aa). Disordered stretches follow at residues 131–235 and 250–350; these read NLST…WERR and RTTT…YFVD. 4 stretches are compositionally biased toward polar residues: residues 148–165, 174–199, 214–223, and 250–267; these read MQPS…ASTP, ADPT…STIV, SRTNLSSFED, and RTTT…QTSR. The WW 1 domain maps to 226-259; that stretch reads GRLPAGWERREDNLGRTYYVDHNTRTTTWTRPSN. The span at 276-291 shows a compositional bias: basic and acidic residues; it reads LERRAHQSRMLPEDRT. Positions 292–306 are enriched in polar residues; the sequence is GASSPNLQENQQQAQ. Over residues 307 to 330 the composition is skewed to low complexity; the sequence is TPPAGGSASAVSMMATGATTAGTG. WW domains are found at residues 330–363 and 390–423; these read GELP…DPRR and GPLP…DPRL. Residues 479–812 form the HECT domain; that stretch reads SASDLKKRLM…VEETLGFGQE (334 aa). The Glycyl thioester intermediate role is filled by Cys-780.

This sequence belongs to the RSP5/NEDD4 family. Interacts with creD.

It localises to the cytoplasm. It catalyses the reaction S-ubiquitinyl-[E2 ubiquitin-conjugating enzyme]-L-cysteine + [acceptor protein]-L-lysine = [E2 ubiquitin-conjugating enzyme]-L-cysteine + N(6)-ubiquitinyl-[acceptor protein]-L-lysine.. The protein operates within protein modification; protein ubiquitination. In terms of biological role, E3 ubiquitin-protein ligase which accepts ubiquitin from an E2 ubiquitin-conjugating enzyme in the form of a thioester and then directly transfers the ubiquitin to targeted substrates. Probably involved in the regulatory network controlling carbon source utilization. The sequence is that of Probable E3 ubiquitin-protein ligase hulA (hulA) from Aspergillus flavus (strain ATCC 200026 / FGSC A1120 / IAM 13836 / NRRL 3357 / JCM 12722 / SRRC 167).